A 104-amino-acid chain; its full sequence is Large ribosomal subunit protein bL21 (104 aa).

It belongs to the bacterial ribosomal protein bL21 family. In terms of assembly, part of the 50S ribosomal subunit. Contacts protein L20.

This protein binds to 23S rRNA in the presence of protein L20. This Helicobacter pylori (strain J99 / ATCC 700824) (Campylobacter pylori J99) protein is Large ribosomal subunit protein bL21.